A 1039-amino-acid polypeptide reads, in one-letter code: RNA-binding protein Unr (1039 aa).

Residues 49–62 show a composition bias toward polar residues; the sequence is TTLGLQPQGQGPSP. Disordered regions lie at residues 49–126 and 165–184; these read TTLG…QQQH and SIFG…PSQT. Low complexity-rich tracts occupy residues 63-80, 89-126, and 165-182; these read QQQQ…QHQQ, QQHM…QQQH, and SIFG…ADPS. Residues 186-250 form the CSD 1 domain; sequence RETGIIEKLL…GKPIASQVSK (65 aa). A CSD 2; degenerate domain is found at 261–337; that stretch reads RVTGTVTTEL…GNLGACHIRL (77 aa). A CSD 3 domain is found at 345–413; it reads KYRGVVCSMK…GREFACNITR (69 aa). The region spanning 428 to 503 is the CSD 4; degenerate domain; sequence VYKGQVLKSL…RDQLQRATSI (76 aa). A CSD 5 domain is found at 517–585; the sequence is REQGTIASLK…SRLQAIRIKH (69 aa). Residues 593–673 form the CSD 6; degenerate domain; it reads FETLVASNIE…KECIAVNVQQ (81 aa). The tract at residues 721–741 is disordered; it reads QNGYVMHGSPGGSTSSVGSNN. Over residues 732 to 741 the composition is skewed to low complexity; sequence GSTSSVGSNN. The 69-residue stretch at 763 to 831 folds into the CSD 7 domain; that stretch reads VYRGFIAVMK…NCLPAENVRM (69 aa). Positions 846 to 919 constitute a CSD 8; degenerate domain; that stretch reads THNGVVARPL…SGRAACVNAV (74 aa). The CSD 9 domain occupies 922 to 987; that stretch reads KKRATVDSIK…GKSSACNVLK (66 aa).

It belongs to the UNR family. Interacts with Sxl; cooperates with Sxl to prevent translation of msl-2 transcripts. Interacts with mle; promoting association between mle and roX2 non-coding RNA. Interacts (via CSD domain 7-9) with pAbp; promoting translation inhibition of msl-2 transcripts.

The protein localises to the cytoplasm. Functionally, RNA-binding protein that acts as a regulator of dosage compensation in both males and females. In males, acts as positive regulator of dosage compensation by promoting assembly of the MSL complex, a multiprotein complex that mediates X-chromosome dosage compensation. Promotes MSL complex assembly via association with roX1 and roX2 non-coding RNA components of the MSL complex, facilitating the interaction between non-coding RNAs and mle. In females, acts as an inhibitor of dosage compensation together with Sxl by preventing production of msl-2 protein, an essential component of the MSL complex. Specifically binds to the 3'-UTR of msl-2 transcripts, and cooperates with Sxl to prevent translation initiation of msl-2 transcripts. Mechanistically, Sxl and Unr inhibit translation initiation by preventing ribosome recruitment after pAbp-mediated recruitment of the eIF4F complex. This Drosophila melanogaster (Fruit fly) protein is RNA-binding protein Unr.